Reading from the N-terminus, the 21-residue chain is Ocellatin-3 (21 aa).

I21 carries the isoleucine amide modification.

Expressed by the skin dorsal glands.

The protein resides in the secreted. Has hemolytic activity against human erythrocytes and antibacterial activity against the Gram-negative bacterium E.coli. This chain is Ocellatin-3, found in Leptodactylus ocellatus (Argus frog).